The primary structure comprises 1395 residues: Autophagy-related protein 11 (1395 aa).

Coiled-coil stretches lie at residues 123–172 (RLSE…DLKK), 246–277 (LRKFNARIADLEKAEGRLMQNFEELEAEFRRV), 555–591 (DELLRSLQDDKTKLETKLRTAESRVRRLEDLLHRQGQ), 629–818 (QSDE…RELY), and 862–986 (NLAL…TTLT). Disordered stretches follow at residues 586-632 (LHRQ…QSDE) and 647-673 (ELQEEKERNAALERDAADRTTHTNDIK). Polar residues predominate over residues 590-619 (GQASRPTLGNLFQNPSQQLPERSGSAQSVG). The segment at 1260 to 1395 (VEAKGDMQTQ…GAIDSLLGPT (136 aa)) is disordered. Low complexity-rich tracts occupy residues 1292–1311 (SKSLSKSLESRRSSTSSTRR) and 1337–1350 (TAPGDGAGSPSGPT).

Belongs to the ATG11 family. Homodimer.

It is found in the preautophagosomal structure membrane. The protein resides in the vacuole membrane. Functionally, involved in cytoplasm to vacuole transport (Cvt), pexophagy, mitophagy and nucleophagy. Recruits mitochondria for their selective degradation via autophagy (mitophagy) during starvation. Works as scaffold proteins that recruit ATG proteins to the pre-autophagosome (PAS), the site of vesicle/autophagosome formation. Required for the Cvt vesicles completion. The polypeptide is Autophagy-related protein 11 (ATG11) (Pyricularia oryzae (strain 70-15 / ATCC MYA-4617 / FGSC 8958) (Rice blast fungus)).